We begin with the raw amino-acid sequence, 382 residues long: MSNRIGPQRSTKTAAKLRLLPSTEEFDDFRRQDTGREVYSQIPQIEGSTAKRDAEHLGKRHREFLPRVTAYCTCDTFRVDLLFKFFQSRRSSHKTRPKQFDECIYSPYSYNNEETTDLLPDTLESSRGTLNRESSQESLQSIFEESGLDRNQPLFREVFCFTYGVVVLWGYTIDEEHRFLRELGRFEIEKLKIEDMEVEEFNYYITTLYQPRIFNDFIALRDASNYMIRLSISHAIAQSVKISLFEELVNETIDATKDTPQMIAETGRVNLKREEIMMAVGQLFILRININLQGSVLDSPELMWTEPQLEPIYTAARSYLEINQRVALLNQRVEVIGDLLSMLKEQITHTHDESLEWIVVILMGLLVLIALFSIVVDWKLFQ.

Ser135 bears the Phosphoserine mark. A helical transmembrane segment spans residues 356–376 (EWIVVILMGLLVLIALFSIVV).

This sequence belongs to the RMD1/sif2 family. Interacts with sad1.

The protein resides in the nucleus membrane. In terms of biological role, required for sporulation where it is believed to have a role in meiotic nuclear division. The sequence is that of Sad1-interacting factor 2 (sif2) from Schizosaccharomyces pombe (strain 972 / ATCC 24843) (Fission yeast).